Reading from the N-terminus, the 354-residue chain is UDP-N-acetylglucosamine--N-acetylmuramyl-(pentapeptide) pyrophosphoryl-undecaprenol N-acetylglucosamine transferase (354 aa).

Residues 12–14 (TGG), Asn124, Arg163, Ser187, Ile240, and Gln285 each bind UDP-N-acetyl-alpha-D-glucosamine.

This sequence belongs to the glycosyltransferase 28 family. MurG subfamily.

It is found in the cell inner membrane. The catalysed reaction is di-trans,octa-cis-undecaprenyl diphospho-N-acetyl-alpha-D-muramoyl-L-alanyl-D-glutamyl-meso-2,6-diaminopimeloyl-D-alanyl-D-alanine + UDP-N-acetyl-alpha-D-glucosamine = di-trans,octa-cis-undecaprenyl diphospho-[N-acetyl-alpha-D-glucosaminyl-(1-&gt;4)]-N-acetyl-alpha-D-muramoyl-L-alanyl-D-glutamyl-meso-2,6-diaminopimeloyl-D-alanyl-D-alanine + UDP + H(+). It functions in the pathway cell wall biogenesis; peptidoglycan biosynthesis. Cell wall formation. Catalyzes the transfer of a GlcNAc subunit on undecaprenyl-pyrophosphoryl-MurNAc-pentapeptide (lipid intermediate I) to form undecaprenyl-pyrophosphoryl-MurNAc-(pentapeptide)GlcNAc (lipid intermediate II). This Methylococcus capsulatus (strain ATCC 33009 / NCIMB 11132 / Bath) protein is UDP-N-acetylglucosamine--N-acetylmuramyl-(pentapeptide) pyrophosphoryl-undecaprenol N-acetylglucosamine transferase.